The primary structure comprises 37 residues: Large ribosomal subunit protein bL36c (37 aa).

Belongs to the bacterial ribosomal protein bL36 family.

The protein localises to the plastid. It localises to the chloroplast. The sequence is that of Large ribosomal subunit protein bL36c from Cryptomeria japonica (Japanese cedar).